The primary structure comprises 292 residues: Undecaprenyl-diphosphatase (292 aa).

Transmembrane regions (helical) follow at residues M1–V21, F46–I66, L90–H110, A114–A134, F192–P212, V225–W245, and V253–V273.

The protein belongs to the UppP family.

The protein localises to the cell inner membrane. It catalyses the reaction di-trans,octa-cis-undecaprenyl diphosphate + H2O = di-trans,octa-cis-undecaprenyl phosphate + phosphate + H(+). Catalyzes the dephosphorylation of undecaprenyl diphosphate (UPP). Confers resistance to bacitracin. This is Undecaprenyl-diphosphatase from Anaeromyxobacter dehalogenans (strain 2CP-1 / ATCC BAA-258).